Reading from the N-terminus, the 494-residue chain is Transcriptional regulator calD (494 aa).

Its subcellular location is the nucleus. Its function is as follows. Transcription co-regulator that might be involved in the regulation of the expression of the gene cluster that mediates the biosynthesis of calbistrins and related compounds such as decumbenones. Calbistrin A is a secondary metabolite with an interesting structure that was recently found to have bioactivity against leukemia cells. It consists of two polyketides linked by an ester bond: a bicyclic decalin containing polyketide and a linear 12 carbon dioic acid structure. This Penicillium decumbens protein is Transcriptional regulator calD.